Reading from the N-terminus, the 1377-residue chain is DNA-directed RNA polymerase subunit beta' (1377 aa).

Positions 60, 62, 75, and 78 each coordinate Zn(2+). Mg(2+) is bound by residues Asp449, Asp451, and Asp453. Residues Cys777, Cys851, Cys858, and Cys861 each coordinate Zn(2+).

This sequence belongs to the RNA polymerase beta' chain family. As to quaternary structure, the RNAP catalytic core consists of 2 alpha, 1 beta, 1 beta' and 1 omega subunit. When a sigma factor is associated with the core the holoenzyme is formed, which can initiate transcription. Requires Mg(2+) as cofactor. The cofactor is Zn(2+).

The catalysed reaction is RNA(n) + a ribonucleoside 5'-triphosphate = RNA(n+1) + diphosphate. Functionally, DNA-dependent RNA polymerase catalyzes the transcription of DNA into RNA using the four ribonucleoside triphosphates as substrates. The protein is DNA-directed RNA polymerase subunit beta' of Borrelia turicatae (strain 91E135).